The primary structure comprises 258 residues: Adenosylcobinamide-GDP ribazoletransferase (258 aa).

A run of 6 helical transmembrane segments spans residues 41–61 (FFPL…WLAS), 65–85 (PAPG…TGAF), 115–135 (IGAF…QLLM), 136–156 (AMAA…HAAS), 197–217 (LPLL…LLAA), and 236–256 (CLGL…LAWT).

The protein belongs to the CobS family. Mg(2+) serves as cofactor.

It localises to the cell inner membrane. It carries out the reaction alpha-ribazole + adenosylcob(III)inamide-GDP = adenosylcob(III)alamin + GMP + H(+). It catalyses the reaction alpha-ribazole 5'-phosphate + adenosylcob(III)inamide-GDP = adenosylcob(III)alamin 5'-phosphate + GMP + H(+). It participates in cofactor biosynthesis; adenosylcobalamin biosynthesis; adenosylcobalamin from cob(II)yrinate a,c-diamide: step 7/7. Its function is as follows. Joins adenosylcobinamide-GDP and alpha-ribazole to generate adenosylcobalamin (Ado-cobalamin). Also synthesizes adenosylcobalamin 5'-phosphate from adenosylcobinamide-GDP and alpha-ribazole 5'-phosphate. The sequence is that of Adenosylcobinamide-GDP ribazoletransferase from Ralstonia nicotianae (strain ATCC BAA-1114 / GMI1000) (Ralstonia solanacearum).